A 136-amino-acid chain; its full sequence is HTH-type transcriptional regulator CysB (136 aa).

In terms of domain architecture, HTH lysR-type spans 1–59 (MDVRQLRSLVTLVEVRFSVSRAAECLHLVQSAVTQHLKQLEAELGTRLFVRHGKRLVGL). The segment at residues 19–38 (VSRAAECLHLVQSAVTQHLK) is a DNA-binding region (H-T-H motif).

Belongs to the LysR transcriptional regulatory family.

Its function is as follows. This protein is a positive regulator of gene expression for the cysteine regulon. The sequence is that of HTH-type transcriptional regulator CysB (cysB) from Thiocapsa roseopersicina.